Here is a 31-residue protein sequence, read N- to C-terminus: Cytochrome b6-f complex subunit 6 (31 aa).

The chain crosses the membrane as a helical span at residues 4 to 26; the sequence is LTSYFGFLLAASTITPALFIGLN.

This sequence belongs to the PetL family. The 4 large subunits of the cytochrome b6-f complex are cytochrome b6, subunit IV (17 kDa polypeptide, PetD), cytochrome f and the Rieske protein, while the 4 small subunits are PetG, PetL, PetM and PetN. The complex functions as a dimer.

The protein resides in the plastid. It is found in the chloroplast thylakoid membrane. Its function is as follows. Component of the cytochrome b6-f complex, which mediates electron transfer between photosystem II (PSII) and photosystem I (PSI), cyclic electron flow around PSI, and state transitions. PetL is important for photoautotrophic growth as well as for electron transfer efficiency and stability of the cytochrome b6-f complex. This Phalaenopsis aphrodite subsp. formosana (Moth orchid) protein is Cytochrome b6-f complex subunit 6.